The chain runs to 493 residues: Lysine--tRNA ligase (493 aa).

Mg(2+) contacts are provided by E402 and E409.

Belongs to the class-II aminoacyl-tRNA synthetase family. Homodimer. It depends on Mg(2+) as a cofactor.

It localises to the cytoplasm. It carries out the reaction tRNA(Lys) + L-lysine + ATP = L-lysyl-tRNA(Lys) + AMP + diphosphate. In Ureaplasma parvum serovar 3 (strain ATCC 27815 / 27 / NCTC 11736), this protein is Lysine--tRNA ligase.